The sequence spans 485 residues: Sperm-associated antigen 8 (485 aa).

Disordered regions lie at residues 1–42 (METN…SPRS), 75–98 (KTPA…EPCA), and 127–215 (TTTD…CIPP). The segment covering 132 to 150 (SSNPGPVPGSSSGPVLGSS) has biased composition (low complexity). The span at 151 to 191 (SGAGHGSGSGSGPGCGSVPGSGSGPGPGSGPGSGPGHGSGS) shows a compositional bias: gly residues. Mn regions lie at residues 327-340 (SSTT…PPGN) and 379-393 (ESVT…LAQA).

Belongs to the SPAG8 family. As to quaternary structure, microtubule inner protein component of sperm flagellar doublet microtubules. Interacts with FHL5 (via second LIM domain). Interacts with RANBP9. Expressed in testis (germ cells), but not in liver, kidney, prostate and small intestine. Expressed in airway epithelial cells.

The protein localises to the cytoplasm. It is found in the nucleus. Its subcellular location is the cytoplasmic vesicle. The protein resides in the secretory vesicle. It localises to the acrosome. The protein localises to the cytoskeleton. It is found in the microtubule organizing center. Its subcellular location is the spindle. The protein resides in the cilium axoneme. It localises to the flagellum axoneme. In terms of biological role, microtubule inner protein (MIP) part of the dynein-decorated doublet microtubules (DMTs) in cilia axoneme, which is required for motile cilia beating. Plays a role in spermatogenesis by enhancing the binding of CREM isoform tau to its coactivator FHL5 and increasing the FHL5-regulated transcriptional activation of CREM isoform tau. Involved in the acrosome reaction and in binding of sperm to the zona pellucida. Plays a role in regulation of the cell cycle by controlling progression through the G2/M phase, possibly by delaying the activation of CDK1 which is required for entry into mitosis. May play a role in fertility and microtubule formation through interaction with RANBP9. This chain is Sperm-associated antigen 8, found in Homo sapiens (Human).